We begin with the raw amino-acid sequence, 81 residues long: MAPRPQKKLFTRKKVCRFCADKELVIDYKDVKVLRNFVSERGKIIPRRIVGTCASHQRQLCEAVKRARQIALLPYSGSAQN.

It belongs to the bacterial ribosomal protein bS18 family. Part of the 30S ribosomal subunit. Forms a tight heterodimer with protein bS6.

Its function is as follows. Binds as a heterodimer with protein bS6 to the central domain of the 16S rRNA, where it helps stabilize the platform of the 30S subunit. This is Small ribosomal subunit protein bS18 from Desulfotalea psychrophila (strain LSv54 / DSM 12343).